The primary structure comprises 342 residues: S-adenosylmethionine:tRNA ribosyltransferase-isomerase (342 aa).

It belongs to the QueA family. In terms of assembly, monomer.

It is found in the cytoplasm. The enzyme catalyses 7-aminomethyl-7-carbaguanosine(34) in tRNA + S-adenosyl-L-methionine = epoxyqueuosine(34) in tRNA + adenine + L-methionine + 2 H(+). It participates in tRNA modification; tRNA-queuosine biosynthesis. In terms of biological role, transfers and isomerizes the ribose moiety from AdoMet to the 7-aminomethyl group of 7-deazaguanine (preQ1-tRNA) to give epoxyqueuosine (oQ-tRNA). The polypeptide is S-adenosylmethionine:tRNA ribosyltransferase-isomerase (Bacillus pumilus (strain SAFR-032)).